The primary structure comprises 290 residues: Beta carbonic anhydrase 6, mitochondrial (290 aa).

The N-terminal 20 residues, 1–20 (MAFTLGGRARRLVSATSVHQ), are a transit peptide targeting the mitochondrion. S122 is subject to Phosphoserine. The residue at position 226 (C226) is an S-nitrosocysteine.

This sequence belongs to the beta-class carbonic anhydrase family. In terms of tissue distribution, strongly expressed in aerial tissues including leaves, stems, flowers and siliques, and, to a lower extent, in roots. Accumulates in guard cells.

The protein localises to the mitochondrion. The catalysed reaction is hydrogencarbonate + H(+) = CO2 + H2O. Reversible hydration of carbon dioxide. This chain is Beta carbonic anhydrase 6, mitochondrial (BCA6), found in Arabidopsis thaliana (Mouse-ear cress).